Reading from the N-terminus, the 251-residue chain is 3-isopropylmalate dehydratase small subunit 1 (251 aa).

The transit peptide at 1–59 (MAASLQSANPTLSRTLASPNKPSSFATFRSPFLRFNSTSVASNFKPLVSREASSSFVTR) directs the protein to the chloroplast.

It belongs to the LeuD family. As to quaternary structure, heterodimer of the large LEUC/IIL1 subunit and the small LEUD (SSU1, SSU2 or SSU3) subunits. As to expression, expressed at low levels in roots, root tips, at the basis of the hypocotyls, and in emerging leaves. In young seedlings, expressed in cotyledon epidermal cells. In hypocotyls, expressed in peripheral cells. In seedling roots, expressed in the epidermis, including root hairs, and throughout the cortex. In rosette leaves, expressed in the upper and lower epidermis. In roots of adult plants, expressed in the root tips and cortex of the mature root enclosing the stele. In flowering stalks, expressed in the epidermis. Expressed in the carpel epidermis.

It is found in the plastid. It localises to the chloroplast stroma. The catalysed reaction is (2R,3S)-3-isopropylmalate = (2S)-2-isopropylmalate. It functions in the pathway amino-acid biosynthesis; L-leucine biosynthesis; L-leucine from 3-methyl-2-oxobutanoate: step 2/4. In terms of biological role, catalyzes the isomerization between 2-isopropylmalate and 3-isopropylmalate, via the formation of 2-isopropylmaleate. Plays an essential role in leucine biosynthesis. Functions in both the biosynthesis of leucine, and in the methionine chain elongation pathway of aliphatic glucosinolate formation. Plays an essential role in female gametophyte development. The chain is 3-isopropylmalate dehydratase small subunit 1 from Arabidopsis thaliana (Mouse-ear cress).